A 168-amino-acid polypeptide reads, in one-letter code: Large ribosomal subunit protein bL17 (168 aa).

The segment covering Ala-121 to Ala-146 has biased composition (basic and acidic residues). The segment at Ala-121 to Glu-168 is disordered. Basic residues predominate over residues Lys-148–Lys-158. The segment covering Ala-159–Glu-168 has biased composition (basic and acidic residues).

The protein belongs to the bacterial ribosomal protein bL17 family. In terms of assembly, part of the 50S ribosomal subunit. Contacts protein L32.

This chain is Large ribosomal subunit protein bL17, found in Anaeromyxobacter sp. (strain Fw109-5).